We begin with the raw amino-acid sequence, 109 residues long: Putative double-stranded DNA mimic protein Ent638_2296 (109 aa).

Belongs to the putative dsDNA mimic protein family.

In terms of biological role, may act as a double-stranded DNA (dsDNA) mimic. Probably regulates the activity of a dsDNA-binding protein. This chain is Putative double-stranded DNA mimic protein Ent638_2296, found in Enterobacter sp. (strain 638).